Consider the following 224-residue polypeptide: 7-cyano-7-deazaguanine synthase (224 aa).

An ATP-binding site is contributed by 10–20 (LSGGLDSATVV). Residues cysteine 189, cysteine 199, cysteine 202, and cysteine 205 each contribute to the Zn(2+) site.

This sequence belongs to the QueC family. The cofactor is Zn(2+).

It carries out the reaction 7-carboxy-7-deazaguanine + NH4(+) + ATP = 7-cyano-7-deazaguanine + ADP + phosphate + H2O + H(+). The protein operates within purine metabolism; 7-cyano-7-deazaguanine biosynthesis. In terms of biological role, catalyzes the ATP-dependent conversion of 7-carboxy-7-deazaguanine (CDG) to 7-cyano-7-deazaguanine (preQ(0)). The polypeptide is 7-cyano-7-deazaguanine synthase (Pseudomonas putida (strain ATCC 700007 / DSM 6899 / JCM 31910 / BCRC 17059 / LMG 24140 / F1)).